The following is a 134-amino-acid chain: Protein NrdI (134 aa).

Belongs to the NrdI family.

In terms of biological role, probably involved in ribonucleotide reductase function. The protein is Protein NrdI of Yersinia pseudotuberculosis serotype O:1b (strain IP 31758).